The primary structure comprises 350 residues: Holliday junction branch migration complex subunit RuvB (350 aa).

The tract at residues 1–183 (MSAERLVNPH…FVAVHRLVFY (183 aa)) is large ATPase domain (RuvB-L). Residues leucine 22, arginine 23, glycine 64, lysine 67, threonine 68, serine 69, 130 to 132 (EDF), arginine 173, tyrosine 183, and arginine 220 contribute to the ATP site. Position 68 (threonine 68) interacts with Mg(2+). The tract at residues 184–254 (SDAAMTEIVS…VAREALAQLE (71 aa)) is small ATPAse domain (RuvB-S). Residues 257–350 (ELGLDENDRR…ESGPQQGTLF (94 aa)) are head domain (RuvB-H). Residues arginine 312 and arginine 317 each contribute to the DNA site.

Belongs to the RuvB family. In terms of assembly, homohexamer. Forms an RuvA(8)-RuvB(12)-Holliday junction (HJ) complex. HJ DNA is sandwiched between 2 RuvA tetramers; dsDNA enters through RuvA and exits via RuvB. An RuvB hexamer assembles on each DNA strand where it exits the tetramer. Each RuvB hexamer is contacted by two RuvA subunits (via domain III) on 2 adjacent RuvB subunits; this complex drives branch migration. In the full resolvosome a probable DNA-RuvA(4)-RuvB(12)-RuvC(2) complex forms which resolves the HJ.

Its subcellular location is the cytoplasm. It catalyses the reaction ATP + H2O = ADP + phosphate + H(+). The RuvA-RuvB-RuvC complex processes Holliday junction (HJ) DNA during genetic recombination and DNA repair, while the RuvA-RuvB complex plays an important role in the rescue of blocked DNA replication forks via replication fork reversal (RFR). RuvA specifically binds to HJ cruciform DNA, conferring on it an open structure. The RuvB hexamer acts as an ATP-dependent pump, pulling dsDNA into and through the RuvAB complex. RuvB forms 2 homohexamers on either side of HJ DNA bound by 1 or 2 RuvA tetramers; 4 subunits per hexamer contact DNA at a time. Coordinated motions by a converter formed by DNA-disengaged RuvB subunits stimulates ATP hydrolysis and nucleotide exchange. Immobilization of the converter enables RuvB to convert the ATP-contained energy into a lever motion, pulling 2 nucleotides of DNA out of the RuvA tetramer per ATP hydrolyzed, thus driving DNA branch migration. The RuvB motors rotate together with the DNA substrate, which together with the progressing nucleotide cycle form the mechanistic basis for DNA recombination by continuous HJ branch migration. Branch migration allows RuvC to scan DNA until it finds its consensus sequence, where it cleaves and resolves cruciform DNA. This Chloroflexus aggregans (strain MD-66 / DSM 9485) protein is Holliday junction branch migration complex subunit RuvB.